A 364-amino-acid chain; its full sequence is CCA-adding enzyme (364 aa).

ATP-binding residues include glycine 19 and arginine 22. Glycine 19 and arginine 22 together coordinate CTP. Positions 32 and 34 each coordinate Mg(2+). Residues arginine 102, arginine 148, and arginine 151 each coordinate ATP. CTP-binding residues include arginine 102, arginine 148, and arginine 151.

It belongs to the tRNA nucleotidyltransferase/poly(A) polymerase family. Bacterial CCA-adding enzyme type 2 subfamily. Mg(2+) is required as a cofactor.

It carries out the reaction a tRNA precursor + 2 CTP + ATP = a tRNA with a 3' CCA end + 3 diphosphate. The enzyme catalyses a tRNA with a 3' CCA end + 2 CTP + ATP = a tRNA with a 3' CCACCA end + 3 diphosphate. Its function is as follows. Catalyzes the addition and repair of the essential 3'-terminal CCA sequence in tRNAs without using a nucleic acid template. Adds these three nucleotides in the order of C, C, and A to the tRNA nucleotide-73, using CTP and ATP as substrates and producing inorganic pyrophosphate. tRNA 3'-terminal CCA addition is required both for tRNA processing and repair. Also involved in tRNA surveillance by mediating tandem CCA addition to generate a CCACCA at the 3' terminus of unstable tRNAs. While stable tRNAs receive only 3'-terminal CCA, unstable tRNAs are marked with CCACCA and rapidly degraded. This is CCA-adding enzyme from Bordetella bronchiseptica (strain ATCC BAA-588 / NCTC 13252 / RB50) (Alcaligenes bronchisepticus).